Consider the following 241-residue polypeptide: DnaJ homolog subfamily B member 6 (241 aa).

Positions 2 to 146 (VDYYEVLGVQ…TGSFFSAFSG (145 aa)) are interaction with HSP70. A J domain is found at 3-69 (DYYEVLGVQR…KKRDIYDKYG (67 aa)). The segment at 119-241 (FEDFFGNRRG…KEQLLRLDNK (123 aa)) is interaction with KRT18. The residue at position 135 (R135) is an Omega-N-methylarginine.

In terms of assembly, homooligomer. Interacts with BAG3, HSPB8 and STUB1. Interacts with ALKBH1. Interacts with HSP70, KRT18 and PTTG.

The protein localises to the cytoplasm. It localises to the perinuclear region. It is found in the nucleus. The protein resides in the myofibril. Its subcellular location is the sarcomere. The protein localises to the z line. Its function is as follows. Has a stimulatory effect on the ATPase activity of HSP70 in a dose-dependent and time-dependent manner and hence acts as a co-chaperone of HSP70. Plays an indispensable role in the organization of KRT8/KRT18 filaments. Acts as an endogenous molecular chaperone for neuronal proteins including huntingtin. Suppresses aggregation and toxicity of polyglutamine-containing, aggregation-prone proteins. Also reduces cellular toxicity and caspase-3 activity. This is DnaJ homolog subfamily B member 6 from Macaca fascicularis (Crab-eating macaque).